A 248-amino-acid chain; its full sequence is MAGHSQFKNIMHRKGKQDSVRSKMFSKLAREITVAAKAGLPDPTMNARLRLAIQNAKAQSMPKDNIERAVKKASGVDGENYEEVRYEGYGPGGVAVIVEALTDNRNRTASNVRSTFSKAGGALGETGSVSFSFDKVGEITYKASVGDADAVMEAAIEAGAEDVTSDEDGHTIICGFEDMNEVSKALEATLGEAESVKAIWKPQNTVPVDEDKAQSLMKLIETLEDDDDVQNVYSNFEVSEEVMARLSA.

It belongs to the TACO1 family.

Its subcellular location is the cytoplasm. This chain is Probable transcriptional regulatory protein Avi_3631, found in Allorhizobium ampelinum (strain ATCC BAA-846 / DSM 112012 / S4) (Agrobacterium vitis (strain S4)).